The chain runs to 379 residues: Homoserine O-succinyltransferase (379 aa).

The region spanning 51–360 (NAVLICHALS…DAPQGHDAFL (310 aa)) is the AB hydrolase-1 domain. Serine 157 acts as the Nucleophile in catalysis. A substrate-binding site is contributed by arginine 227. Catalysis depends on residues aspartate 323 and histidine 356. Substrate is bound at residue aspartate 357.

This sequence belongs to the AB hydrolase superfamily. MetX family. As to quaternary structure, homodimer.

It localises to the cytoplasm. The catalysed reaction is L-homoserine + succinyl-CoA = O-succinyl-L-homoserine + CoA. It functions in the pathway amino-acid biosynthesis; L-methionine biosynthesis via de novo pathway; O-succinyl-L-homoserine from L-homoserine: step 1/1. In terms of biological role, transfers a succinyl group from succinyl-CoA to L-homoserine, forming succinyl-L-homoserine. This Pseudomonas fluorescens (strain ATCC BAA-477 / NRRL B-23932 / Pf-5) protein is Homoserine O-succinyltransferase.